Consider the following 330-residue polypeptide: Probable UDP-3-O-acylglucosamine N-acyltransferase 1, mitochondrial (330 aa).

Residues 1–52 constitute a mitochondrion transit peptide; that stretch reads MANSLRTLFSVSTHGVFLNKRSSYRVRKVFVGMPLRICSEIPRFVSVSCIRS. 160 to 162 contacts UDP-N-acetyl-alpha-D-glucosamine; sequence FGF. The hexadecanoate site is built by D210 and Q214. The active-site Proton acceptor is the H217. Positions 218, 236, and 254 each coordinate UDP-N-acetyl-alpha-D-glucosamine.

This sequence belongs to the transferase hexapeptide repeat family. LpxD subfamily. In terms of assembly, homotrimer.

The protein resides in the mitochondrion. The enzyme catalyses a UDP-3-O-[(3R)-3-hydroxyacyl]-alpha-D-glucosamine + a (3R)-hydroxyacyl-[ACP] = a UDP-2-N,3-O-bis[(3R)-3-hydroxyacyl]-alpha-D-glucosamine + holo-[ACP] + H(+). The protein operates within glycolipid biosynthesis; lipid IV(A) biosynthesis; lipid IV(A) from (3R)-3-hydroxytetradecanoyl-[acyl-carrier-protein] and UDP-N-acetyl-alpha-D-glucosamine: step 3/6. Involved in the biosynthesis of lipid A, a phosphorylated glycolipid that in bacteria anchors the lipopolysaccharide to the outer membrane of the cell. Lipid A-like molecules in plants may serve as structural components of the outer membranes of mitochondria and/or chloroplasts, or may be involved in signal transduction or plant defense responses. The polypeptide is Probable UDP-3-O-acylglucosamine N-acyltransferase 1, mitochondrial (LPXD1) (Arabidopsis thaliana (Mouse-ear cress)).